The chain runs to 298 residues: Lipoyl synthase (298 aa).

[4Fe-4S] cluster-binding residues include C40, C45, C51, C67, C71, C74, and S280. The region spanning 53-269 (AVRKTATFMI…KEIALSKGFS (217 aa)) is the Radical SAM core domain.

This sequence belongs to the radical SAM superfamily. Lipoyl synthase family. Requires [4Fe-4S] cluster as cofactor.

The protein resides in the cytoplasm. It carries out the reaction [[Fe-S] cluster scaffold protein carrying a second [4Fe-4S](2+) cluster] + N(6)-octanoyl-L-lysyl-[protein] + 2 oxidized [2Fe-2S]-[ferredoxin] + 2 S-adenosyl-L-methionine + 4 H(+) = [[Fe-S] cluster scaffold protein] + N(6)-[(R)-dihydrolipoyl]-L-lysyl-[protein] + 4 Fe(3+) + 2 hydrogen sulfide + 2 5'-deoxyadenosine + 2 L-methionine + 2 reduced [2Fe-2S]-[ferredoxin]. Its pathway is protein modification; protein lipoylation via endogenous pathway; protein N(6)-(lipoyl)lysine from octanoyl-[acyl-carrier-protein]. Functionally, catalyzes the radical-mediated insertion of two sulfur atoms into the C-6 and C-8 positions of the octanoyl moiety bound to the lipoyl domains of lipoate-dependent enzymes, thereby converting the octanoylated domains into lipoylated derivatives. The chain is Lipoyl synthase from Bacillus cereus (strain ATCC 10987 / NRS 248).